The primary structure comprises 321 residues: GDP-L-fucose synthase (321 aa).

14–20 (GGSGLVG) serves as a coordination point for NADP(+). The Proton donor/acceptor role is filled by Y143. NADP(+) contacts are provided by residues K147, 170–173 (PTNV), and H186. K194, W208, R215, and D277 together coordinate substrate.

This sequence belongs to the NAD(P)-dependent epimerase/dehydratase family. Fucose synthase subfamily. Homodimer.

The catalysed reaction is GDP-beta-L-fucose + NADP(+) = GDP-4-dehydro-alpha-D-rhamnose + NADPH + H(+). The protein operates within nucleotide-sugar biosynthesis; GDP-L-fucose biosynthesis via de novo pathway; GDP-L-fucose from GDP-alpha-D-mannose: step 2/2. Catalyzes the two-step NADP-dependent conversion of GDP-4-dehydro-6-deoxy-D-mannose to GDP-fucose, involving an epimerase and a reductase reaction. This Mus musculus (Mouse) protein is GDP-L-fucose synthase.